We begin with the raw amino-acid sequence, 187 residues long: Putative manganese efflux pump MntP (187 aa).

Helical transmembrane passes span 3 to 23, 41 to 61, 62 to 82, 107 to 129, 143 to 163, and 166 to 186; these read MSATLILAFAMSMDAFAASIG, LIFGVIEAITPLIGWALGFFA, SQYILEWDHWVAFTLLLILGG, LLVCTAIATSLDAMAIGVGLAFL, ATMIMVTLGMMIGRYIGPILG, and AEIIGGLVLIGIGCNILYEHL.

The protein belongs to the MntP (TC 9.B.29) family.

Its subcellular location is the cell inner membrane. Its function is as follows. Probably functions as a manganese efflux pump. The protein is Putative manganese efflux pump MntP of Pectobacterium atrosepticum (strain SCRI 1043 / ATCC BAA-672) (Erwinia carotovora subsp. atroseptica).